Reading from the N-terminus, the 208-residue chain is Protein-L-isoaspartate O-methyltransferase (208 aa).

Residue Ser59 is part of the active site.

It belongs to the methyltransferase superfamily. L-isoaspartyl/D-aspartyl protein methyltransferase family.

Its subcellular location is the cytoplasm. It carries out the reaction [protein]-L-isoaspartate + S-adenosyl-L-methionine = [protein]-L-isoaspartate alpha-methyl ester + S-adenosyl-L-homocysteine. Its function is as follows. Catalyzes the methyl esterification of L-isoaspartyl residues in peptides and proteins that result from spontaneous decomposition of normal L-aspartyl and L-asparaginyl residues. It plays a role in the repair and/or degradation of damaged proteins. This chain is Protein-L-isoaspartate O-methyltransferase, found in Vibrio campbellii (strain ATCC BAA-1116).